The sequence spans 198 residues: Acyl carrier protein phosphodiesterase (198 aa).

It belongs to the AcpH family.

The catalysed reaction is holo-[ACP] + H2O = apo-[ACP] + (R)-4'-phosphopantetheine + H(+). Functionally, converts holo-ACP to apo-ACP by hydrolytic cleavage of the phosphopantetheine prosthetic group from ACP. In Photorhabdus laumondii subsp. laumondii (strain DSM 15139 / CIP 105565 / TT01) (Photorhabdus luminescens subsp. laumondii), this protein is Acyl carrier protein phosphodiesterase.